Consider the following 428-residue polypeptide: MKRGKISSLKGELHIPGDKSISHRSVMFGAMAEGKTVIKNFLPGADCLSTIACFRKMGVEIEQNGSDVTVRGKGLDQLAEPAELLDVGNSGTTIRLMLGILAGRPFHSTVAGDESIAKRPMKRVTEPLRKMGAKIDGRAGGEYTPLSVRGGHLKAIDFQSPVASAQIKSAVLLAGLQAEGTTTVTEPHKSRDHTERMLSMFGVSLREDETSVSIEGGQQLKAAEVFVPGDISSAAFFLAAASLVPGSEVVLRNVGLNPTRTGIIDVLKEMGADLEIEEKDTGNTEPYGDLRIKTSSLKAAEISGDLIPRLIDEIPIIALLATQAEGTTVIKDAAELKVKETNRIDTVASELKKIGANIEPTEDGMKIHGKTPLTGGAKVSSHGDHRIGMMLGIAACICEQPIDILQPEAVSVSYPSFFEHIEKLAEKA.

Residues Lys19, Ser20, and Arg24 each contribute to the 3-phosphoshikimate site. Residue Lys19 participates in phosphoenolpyruvate binding. Phosphoenolpyruvate contacts are provided by Gly91 and Arg119. Residues Ser164, Gln166, Asp312, and Lys339 each coordinate 3-phosphoshikimate. Residue Gln166 participates in phosphoenolpyruvate binding. Residue Asp312 is the Proton acceptor of the active site. 2 residues coordinate phosphoenolpyruvate: Arg343 and Arg386.

The protein belongs to the EPSP synthase family. Monomer.

It localises to the cytoplasm. The enzyme catalyses 3-phosphoshikimate + phosphoenolpyruvate = 5-O-(1-carboxyvinyl)-3-phosphoshikimate + phosphate. It participates in metabolic intermediate biosynthesis; chorismate biosynthesis; chorismate from D-erythrose 4-phosphate and phosphoenolpyruvate: step 6/7. Its function is as follows. Catalyzes the transfer of the enolpyruvyl moiety of phosphoenolpyruvate (PEP) to the 5-hydroxyl of shikimate-3-phosphate (S3P) to produce enolpyruvyl shikimate-3-phosphate and inorganic phosphate. This chain is 3-phosphoshikimate 1-carboxyvinyltransferase, found in Bacillus licheniformis (strain ATCC 14580 / DSM 13 / JCM 2505 / CCUG 7422 / NBRC 12200 / NCIMB 9375 / NCTC 10341 / NRRL NRS-1264 / Gibson 46).